The primary structure comprises 228 residues: uncharacterized protein (228 aa).

S-adenosyl-L-methionine contacts are provided by G179, I199, and L208.

This sequence belongs to the class IV-like SAM-binding methyltransferase superfamily. RNA methyltransferase TrmH family.

This is an uncharacterized protein from Borreliella burgdorferi (strain ATCC 35210 / DSM 4680 / CIP 102532 / B31) (Borrelia burgdorferi).